An 804-amino-acid chain; its full sequence is MAESGEALGTVPEHERILQEIESTDTACVGPTLRSVYDGQPNAHKKFMEKLDACIRNHDKEIEKMCNFHHQGFVDAITELLKVRADAEKLKVQVTDTNRRFQDAGKEVIEQTEDIIRCRIQQRNITTVVEKLQLCLPVLEMYSKLKEQMSMQRYYSALKTMEQLENVYFPRVSQYRFCQLMMDTLPKLREDIKDISMSDLKDFLESIRKHSDKIGETAMKQAQQQKSFSIAVQKQTNMRFGKNMHVNNDRTLEEKSDIILKHTLEEEAENDEEVLTVQDLVDFSPVYRCSHIYSALGDEETFENYYRKQRKKQARLVLQPQSSVHETVDGYRRYFTQIVGFFVVEDHILHVTQGLVTRAYTDELWNMALSKIIAVLRAHSSYCTDPDLVLELKNLIVIFADTLQGYGFSVNRLFDLLFEIRDQYNETLLKKWAGIFRDIFEEDNYSPIPIGSEEEYKMVISKFPFQDPDLEKQSFPKKFPMSQSVPLIYIQVKEFIYASLKFSESLHRSSTEIDDMLRKSTNLLLTRILSSCLLNLIRKPHIGLTELVQIIINTTHLEQACKYLEDFITNITNISQETVHTTRLYGLSTFKDARHAAEGEIYTKLNQKIDEFVQLADYDWTMAESDGRASGYLMDLINFLRSIFQVFTHLPGKVAQTACMSACQHLSTSLMQMLLDSELKQISMGAVQQFNLDVIQCELFASSEPVPGFQGDTLQLAFIDLRQLLDLFMVWDWSTYLADYGQPASKYLRVNPHAALTLLEKMKDTSKKNNIFAQFRKNDRDRQKLIETVVKQLRGLVTGMSQHM.

The protein belongs to the SEC15 family. In terms of assembly, the exocyst complex is composed of EXOC1, EXOC2, EXOC3, EXOC4, EXOC5, EXOC6, EXOC7 and EXOC8. Interacts with CNTRL. Interacts with RAB11A in a GTP-dependent manner.

Its subcellular location is the cytoplasm. It is found in the perinuclear region. The protein localises to the cell projection. It localises to the growth cone. The protein resides in the midbody. Its subcellular location is the midbody ring. Its function is as follows. Component of the exocyst complex involved in the docking of exocytic vesicles with fusion sites on the plasma membrane. Together with RAB11A, RAB3IP, RAB8A, PARD3, PRKCI, ANXA2, CDC42 and DNMBP promotes transcytosis of PODXL to the apical membrane initiation sites (AMIS), apical surface formation and lumenogenesis. The polypeptide is Exocyst complex component 6 (Exoc6) (Rattus norvegicus (Rat)).